The chain runs to 318 residues: Olfactory receptor 13C9 (318 aa).

Topologically, residues 1–25 (MEWENQTILVEFFLKGHSVHPRLEL) are extracellular. Asparagine 5 carries N-linked (GlcNAc...) asparagine glycosylation. A helical transmembrane segment spans residues 26 to 46 (LFFVLIFIMYVVILLGNGTLI). Residues 47–54 (LISILDPH) are Cytoplasmic-facing. The helical transmembrane segment at 55–75 (LHTPMYFFLGNLSFLDICYTT) threads the bilayer. Residues 76–99 (TSIPSTLVSFLSERKTISFSGCAV) are Extracellular-facing. The cysteines at positions 97 and 189 are disulfide-linked. A helical membrane pass occupies residues 100–120 (QMFLGLAMGTTECVLLGMMAF). The Cytoplasmic segment spans residues 121 to 139 (DRYVAICNPLRYPIIMSKN). Residues 140 to 160 (AYVPMAVGSWFAGIVNSAVQT) form a helical membrane-spanning segment. Residues 161 to 197 (TFVVQLPFCRKNVINHFSCEILAVMKLACADISGNEF) lie on the Extracellular side of the membrane. The helical transmembrane segment at 198-217 (LMLVATILFTLMPLLLIVIS) threads the bilayer. Over 218–237 (YSLIISSILKIHSSEGRSKA) the chain is Cytoplasmic. The helical transmembrane segment at 238 to 258 (FSTCSAHLTVVIIFYGTILFM) threads the bilayer. Residues 259 to 277 (YMKPKSKETLNSDDLDATD) lie on the Extracellular side of the membrane. Residues 278–298 (KIISMFYGVMTPMMNPLIYSL) traverse the membrane as a helical segment. Residues 299–318 (RNKDVKEAVKHLPNRRFFSK) lie on the Cytoplasmic side of the membrane.

This sequence belongs to the G-protein coupled receptor 1 family.

The protein resides in the cell membrane. In terms of biological role, odorant receptor. The polypeptide is Olfactory receptor 13C9 (OR13C9) (Homo sapiens (Human)).